A 325-amino-acid polypeptide reads, in one-letter code: Elongation factor P--(R)-beta-lysine ligase (325 aa).

Residue 76–78 (SPE) participates in substrate binding. ATP-binding positions include 100 to 102 (RNE) and Asn109. Tyr118 is a substrate binding site. Residue 244–245 (EL) participates in ATP binding. A substrate-binding site is contributed by Glu251. ATP is bound at residue Gly300.

Belongs to the class-II aminoacyl-tRNA synthetase family. EpmA subfamily. In terms of assembly, homodimer.

It catalyses the reaction D-beta-lysine + L-lysyl-[protein] + ATP = N(6)-((3R)-3,6-diaminohexanoyl)-L-lysyl-[protein] + AMP + diphosphate + H(+). Functionally, with EpmB is involved in the beta-lysylation step of the post-translational modification of translation elongation factor P (EF-P). Catalyzes the ATP-dependent activation of (R)-beta-lysine produced by EpmB, forming a lysyl-adenylate, from which the beta-lysyl moiety is then transferred to the epsilon-amino group of a conserved specific lysine residue in EF-P. In Edwardsiella ictaluri (strain 93-146), this protein is Elongation factor P--(R)-beta-lysine ligase.